The chain runs to 148 residues: FAD synthase (148 aa).

ATP contacts are provided by residues 14–15, 19–22, and Asp100; these read VF and HAGH.

The protein belongs to the archaeal FAD synthase family. Homodimer. A divalent metal cation is required as a cofactor.

It catalyses the reaction FMN + ATP + H(+) = FAD + diphosphate. It functions in the pathway cofactor biosynthesis; FAD biosynthesis; FAD from FMN: step 1/1. Its function is as follows. Catalyzes the transfer of the AMP portion of ATP to flavin mononucleotide (FMN) to produce flavin adenine dinucleotide (FAD) coenzyme. The polypeptide is FAD synthase (Pyrococcus horikoshii (strain ATCC 700860 / DSM 12428 / JCM 9974 / NBRC 100139 / OT-3)).